Reading from the N-terminus, the 236-residue chain is MAATLLDVCAVVPAAGFGRRMQTECPKQYLSIGNKTILEHSVHALLAHPRVTRVVIAISPGDHRFAQLPLANHPQITVVDGGNERADSVLAGLQAVAKAQWVLVHDAARPCLHQDDLARLLAISENSRVGGILASPVRDTMKRGEPGKNAIAHTVERADLWHALTPQFFPRELLHDCLTRALNEGATITDEASALEYCGFHPALVEGRADNIKVTRPEDLALAEFYLTRTIHQEKA.

This sequence belongs to the IspD/TarI cytidylyltransferase family. IspD subfamily. Homodimer.

The catalysed reaction is 2-C-methyl-D-erythritol 4-phosphate + CTP + H(+) = 4-CDP-2-C-methyl-D-erythritol + diphosphate. Its pathway is isoprenoid biosynthesis; isopentenyl diphosphate biosynthesis via DXP pathway; isopentenyl diphosphate from 1-deoxy-D-xylulose 5-phosphate: step 2/6. In terms of biological role, catalyzes the formation of 4-diphosphocytidyl-2-C-methyl-D-erythritol from CTP and 2-C-methyl-D-erythritol 4-phosphate (MEP). The chain is 2-C-methyl-D-erythritol 4-phosphate cytidylyltransferase from Salmonella schwarzengrund (strain CVM19633).